A 52-amino-acid chain; its full sequence is AKNYPTVSGSDHLRQVFXMGLSDQALLSDPVFRPLVEKXFFDDYAXRSGFEG.

The protein is Unknown protein from spot 415 of 2D-PAGE of etiolated coleoptile of Zea mays (Maize).